A 285-amino-acid polypeptide reads, in one-letter code: Sulfotransferase 2A1 (285 aa).

Positions 44, 45, 46, 47, 48, and 49 each coordinate 3'-phosphoadenylyl sulfate. The active-site Proton acceptor is the histidine 99. 3'-phosphoadenylyl sulfate-binding residues include arginine 121, serine 129, tyrosine 184, serine 218, methionine 223, arginine 247, lysine 248, and glycine 249.

It belongs to the sulfotransferase 1 family. As to quaternary structure, homodimer. Highly expressed in liver.

The protein localises to the cytoplasm. The enzyme catalyses an alcohol + 3'-phosphoadenylyl sulfate = an alkyl sulfate + adenosine 3',5'-bisphosphate + H(+). The catalysed reaction is taurolithocholate + 3'-phosphoadenylyl sulfate = taurolithocholate 3-sulfate + adenosine 3',5'-bisphosphate + H(+). It carries out the reaction pregnenolone + 3'-phosphoadenylyl sulfate = pregnenolone sulfate + adenosine 3',5'-bisphosphate + H(+). It catalyses the reaction 3beta-hydroxyandrost-5-en-17-one + 3'-phosphoadenylyl sulfate = dehydroepiandrosterone 3-sulfate + adenosine 3',5'-bisphosphate + H(+). The enzyme catalyses lithocholate + 3'-phosphoadenylyl sulfate = lithocholate sulfate + adenosine 3',5'-bisphosphate + H(+). The catalysed reaction is (24S)-hydroxycholesterol + 3'-phosphoadenylyl sulfate = (24S)-hydroxycholesterol 24-sulfate + adenosine 3',5'-bisphosphate + H(+). It carries out the reaction (24S)-hydroxycholesterol + 3'-phosphoadenylyl sulfate = (24S)-hydroxycholesterol 3-sulfate + adenosine 3',5'-bisphosphate + H(+). It catalyses the reaction (24S)-hydroxycholesterol 24-sulfate + 3'-phosphoadenylyl sulfate = (24S)-hydroxycholesterol 3,24-disulfate + adenosine 3',5'-bisphosphate + H(+). The enzyme catalyses androsterone + 3'-phosphoadenylyl sulfate = androsterone 3alpha-sulfate + adenosine 3',5'-bisphosphate + H(+). Sulfotransferase that utilizes 3'-phospho-5'-adenylyl sulfate (PAPS) as sulfonate donor to catalyze the sulfonation of steroids and bile acids in the liver and adrenal glands. Mediates the sulfation of a wide range of steroids and sterols, including pregnenolone, androsterone, DHEA, bile acids, cholesterol and as well many xenobiotics that contain alcohol and phenol functional groups. Sulfonation increases the water solubility of most compounds, and therefore their renal excretion, but it can also result in bioactivation to form active metabolites. Plays an important role in maintening steroid and lipid homeostasis. Plays a key role in bile acid metabolism. In addition, catalyzes the metabolic activation of potent carcinogenic polycyclic arylmethanols. This is Sulfotransferase 2A1 (Sult2a1) from Mus musculus (Mouse).